The sequence spans 346 residues: Probable RNA methyltransferase PA14_40730 (346 aa).

Glutamate 91 (proton acceptor) is an active-site residue. The Radical SAM core domain maps to 94-320 (LLPRGGLCVS…TKVRNSAGQD (227 aa)). An intrachain disulfide couples cysteine 101 to cysteine 325. Positions 108, 112, and 115 each coordinate [4Fe-4S] cluster. S-adenosyl-L-methionine is bound by residues 153–154 (GE), serine 183, 206–208 (SLH), and asparagine 282. The active-site S-methylcysteine intermediate is the cysteine 325.

This sequence belongs to the radical SAM superfamily. RlmN family. [4Fe-4S] cluster serves as cofactor.

Its subcellular location is the cytoplasm. This Pseudomonas aeruginosa (strain UCBPP-PA14) protein is Probable RNA methyltransferase PA14_40730.